A 611-amino-acid polypeptide reads, in one-letter code: Protein PES4 (611 aa).

A disordered region spans residues 37-81 (FNPVVTPIRPDDYHEKTSRSSSSSHSDSPEFLRINNNKSGHKNGK). Residues 45 to 54 (RPDDYHEKTS) show a composition bias toward basic and acidic residues. 4 consecutive RRM domains span residues 91 to 169 (VPLF…PSLR), 179 to 247 (TNVF…GKKI), 303 to 379 (NSIF…RAQD), and 393 to 471 (STLF…WERQ).

It is found in the nucleus. The sequence is that of Protein PES4 (PES4) from Saccharomyces cerevisiae (strain ATCC 204508 / S288c) (Baker's yeast).